The following is a 121-amino-acid chain: Large ribosomal subunit protein uL14 (121 aa).

This sequence belongs to the universal ribosomal protein uL14 family. In terms of assembly, part of the 50S ribosomal subunit. Forms a cluster with proteins L3 and L19. In the 70S ribosome, L14 and L19 interact and together make contacts with the 16S rRNA in bridges B5 and B8.

Its function is as follows. Binds to 23S rRNA. Forms part of two intersubunit bridges in the 70S ribosome. In Prochlorococcus marinus (strain NATL1A), this protein is Large ribosomal subunit protein uL14.